Consider the following 172-residue polypeptide: MIIRLAGMSVRQGCLLGLLMCALMMGVALVLQYVYGLTPCPLCIGQRIAVLLAAFVFAIGALHNPAGNLGRGLYAGLAALASVLGLAVAARHVWLQSLPPENVPSCGPGLDYMMEVLPLWDVLSRVLAGSGECAEIHGSLLGMSIPQWTLLGFAVLLLIPLGMLAGIVIRRR.

The Cytoplasmic portion of the chain corresponds to 1-13 (MIIRLAGMSVRQG). A helical transmembrane segment spans residues 14–30 (CLLGLLMCALMMGVALV). At 31–48 (LQYVYGLTPCPLCIGQRI) the chain is on the periplasmic side. A disulfide bridge connects residues Cys40 and Cys43. Residues 49 to 65 (AVLLAAFVFAIGALHNP) traverse the membrane as a helical segment. Residues 66-72 (AGNLGRG) are Cytoplasmic-facing. A helical transmembrane segment spans residues 73–90 (LYAGLAALASVLGLAVAA). The Periplasmic portion of the chain corresponds to 91–147 (RHVWLQSLPPENVPSCGPGLDYMMEVLPLWDVLSRVLAGSGECAEIHGSLLGMSIPQ). Residues Cys106 and Cys133 are joined by a disulfide bond. A helical transmembrane segment spans residues 148 to 166 (WTLLGFAVLLLIPLGMLAG). The Cytoplasmic segment spans residues 167 to 172 (IVIRRR).

The protein belongs to the DsbB family.

Its subcellular location is the cell inner membrane. Functionally, required for disulfide bond formation in some periplasmic proteins. Acts by oxidizing the DsbA protein. The sequence is that of Disulfide bond formation protein B from Chromohalobacter salexigens (strain ATCC BAA-138 / DSM 3043 / CIP 106854 / NCIMB 13768 / 1H11).